Here is a 320-residue protein sequence, read N- to C-terminus: Lipoyl synthase (320 aa).

[4Fe-4S] cluster is bound by residues Cys67, Cys72, Cys78, Cys93, Cys97, Cys100, and Ser307. A Radical SAM core domain is found at Phe79 to Glu296.

The protein belongs to the radical SAM superfamily. Lipoyl synthase family. Requires [4Fe-4S] cluster as cofactor.

Its subcellular location is the cytoplasm. The catalysed reaction is [[Fe-S] cluster scaffold protein carrying a second [4Fe-4S](2+) cluster] + N(6)-octanoyl-L-lysyl-[protein] + 2 oxidized [2Fe-2S]-[ferredoxin] + 2 S-adenosyl-L-methionine + 4 H(+) = [[Fe-S] cluster scaffold protein] + N(6)-[(R)-dihydrolipoyl]-L-lysyl-[protein] + 4 Fe(3+) + 2 hydrogen sulfide + 2 5'-deoxyadenosine + 2 L-methionine + 2 reduced [2Fe-2S]-[ferredoxin]. Its pathway is protein modification; protein lipoylation via endogenous pathway; protein N(6)-(lipoyl)lysine from octanoyl-[acyl-carrier-protein]: step 2/2. Functionally, catalyzes the radical-mediated insertion of two sulfur atoms into the C-6 and C-8 positions of the octanoyl moiety bound to the lipoyl domains of lipoate-dependent enzymes, thereby converting the octanoylated domains into lipoylated derivatives. This is Lipoyl synthase from Histophilus somni (strain 129Pt) (Haemophilus somnus).